A 134-amino-acid polypeptide reads, in one-letter code: UPF0216 protein AF_0460 (134 aa).

This sequence belongs to the UPF0216 family.

This is UPF0216 protein AF_0460 from Archaeoglobus fulgidus (strain ATCC 49558 / DSM 4304 / JCM 9628 / NBRC 100126 / VC-16).